The primary structure comprises 251 residues: Cathelicidin-B1 (251 aa).

Positions 1-20 are cleaved as a signal peptide; that stretch reads MGRMWASEVLLLLLLGSSRA. The propeptide occupies 21-211; that stretch reads VTPGLDVSTA…ELRCRPLRPQ (191 aa). Positions 29–109 are disordered; that stretch reads TAPGLDGSIP…TITPKQDGSI (81 aa). Disulfide bonds link cysteine 172–cysteine 181 and cysteine 189–cysteine 205.

It belongs to the cathelicidin family. In terms of tissue distribution, detected in bursa of Fabricius, in filamentous structures surrounding the basal and lateral surfaces of bursal M cells (at protein level). Detected in bursa of Fabricius, in secretory enterocytes of the interfollicular bursal epithelium, but not in M cells.

Its subcellular location is the secreted. Functionally, has potent antimicrobial activity against Gram-positive and Gram-negative bacteria (in vitro). May play a role in the innate immune response. The chain is Cathelicidin-B1 (CATHB1) from Gallus gallus (Chicken).